A 497-amino-acid polypeptide reads, in one-letter code: Probable cytosol aminopeptidase (497 aa).

Positions 263 and 268 each coordinate Mn(2+). Lys275 is a catalytic residue. The Mn(2+) site is built by Asp286, Asp345, and Glu347. Residue Arg349 is part of the active site.

This sequence belongs to the peptidase M17 family. Mn(2+) is required as a cofactor.

The protein resides in the cytoplasm. It catalyses the reaction Release of an N-terminal amino acid, Xaa-|-Yaa-, in which Xaa is preferably Leu, but may be other amino acids including Pro although not Arg or Lys, and Yaa may be Pro. Amino acid amides and methyl esters are also readily hydrolyzed, but rates on arylamides are exceedingly low.. It carries out the reaction Release of an N-terminal amino acid, preferentially leucine, but not glutamic or aspartic acids.. Functionally, presumably involved in the processing and regular turnover of intracellular proteins. Catalyzes the removal of unsubstituted N-terminal amino acids from various peptides. This Brucella suis biovar 1 (strain 1330) protein is Probable cytosol aminopeptidase.